Here is a 397-residue protein sequence, read N- to C-terminus: Phosphoribulokinase, chloroplastic (397 aa).

The N-terminal 44 residues, 1–44, are a transit peptide targeting the chloroplast; the sequence is MAVSAYTVPTTSHLGFNQKKQLFFCNKSAYKRVSFSSRPCVITC. Cys-62 and Cys-101 are joined by a disulfide.

Belongs to the phosphoribulokinase family.

The protein resides in the plastid. The protein localises to the chloroplast. The enzyme catalyses D-ribulose 5-phosphate + ATP = D-ribulose 1,5-bisphosphate + ADP + H(+). The protein operates within carbohydrate biosynthesis; Calvin cycle. Its activity is regulated as follows. Light regulated via thioredoxin by reversible oxidation/reduction of sulfhydryl/disulfide groups. This Mesembryanthemum crystallinum (Common ice plant) protein is Phosphoribulokinase, chloroplastic.